The chain runs to 701 residues: 1,4-alpha-glucan branching enzyme GlgB (701 aa).

Catalysis depends on Asp381, which acts as the Nucleophile. The active-site Proton donor is Glu434.

The protein belongs to the glycosyl hydrolase 13 family. GlgB subfamily. As to quaternary structure, monomer.

The catalysed reaction is Transfers a segment of a (1-&gt;4)-alpha-D-glucan chain to a primary hydroxy group in a similar glucan chain.. The protein operates within glycan biosynthesis; glycogen biosynthesis. Functionally, catalyzes the formation of the alpha-1,6-glucosidic linkages in glycogen by scission of a 1,4-alpha-linked oligosaccharide from growing alpha-1,4-glucan chains and the subsequent attachment of the oligosaccharide to the alpha-1,6 position. This chain is 1,4-alpha-glucan branching enzyme GlgB, found in Jannaschia sp. (strain CCS1).